The sequence spans 292 residues: Glycine--tRNA ligase alpha subunit (292 aa).

It belongs to the class-II aminoacyl-tRNA synthetase family. As to quaternary structure, tetramer of two alpha and two beta subunits.

The protein resides in the cytoplasm. It carries out the reaction tRNA(Gly) + glycine + ATP = glycyl-tRNA(Gly) + AMP + diphosphate. The polypeptide is Glycine--tRNA ligase alpha subunit (Geobacter sulfurreducens (strain ATCC 51573 / DSM 12127 / PCA)).